Reading from the N-terminus, the 507-residue chain is MAMASLARRKAYFLTRNLSNSPTDALRFSFSLSRGFASSGSDENDVVIIGGGPGGYVAAIKASQLGLKTTCIEKRGALGGTCLNVGCIPSKALLHSSHMYHEAKHSFANHGIKVSSVEVDLPAMLAQKDNAVKNLTRGIEGLFKKNKVTYVKGYGKFISPNEVSVETIDGGNTIVKGKHIIVATGSDVKSLPGITIDEKKIVSSTGALSLSEVPKKLIVIGAGYIGLEMGSVWGRLGSEVTVVEFAGDIVPSMDGEIRKQFQRSLEKQKMKFMLKTKVVSVDSSSDGVKLTVEPAEGGEQSILEADVVLVSAGRTPFTSGLDLEKIGVETDKAGRILVNDRFLSNVPGVYAIGDVIPGPMLAHKAEEDGVACVEFIAGKHGHVDYDKVPGVVYTHPEVASVGKTEEQLKKEGVSYRVGKFPFMANSRAKAIDNAEGLVKILADKETDKILGVHIMAPNAGELIHEAVLAINYDASSEDIARVCHAHPTMSEALKEAAMATYDKPIHI.

Residues 1-36 (MAMASLARRKAYFLTRNLSNSPTDALRFSFSLSRGF) constitute a mitochondrion transit peptide. FAD-binding positions include 73-82 (EKRGALGGTC), lysine 91, glycine 155, and 184-186 (TGS). A disulfide bridge links cysteine 82 with cysteine 87. Residues 221–228 (GAGYIGLE), glutamate 244, valine 278, and glycine 313 contribute to the NAD(+) site. FAD is bound by residues aspartate 354 and 360 to 363 (MLAH). Histidine 486 (proton acceptor) is an active-site residue.

The protein belongs to the class-I pyridine nucleotide-disulfide oxidoreductase family. Homodimer. Part of both the glycine cleavage system composed of four proteins: P, T, L and H and of the pyruvate dehydrogenase complex containing multiple copies of three enzymatic components: pyruvate dehydrogenase (E1), dihydrolipoamide acetyltransferase (E2) and lipoamide dehydrogenase (E3). Requires FAD as cofactor. In terms of processing, S-nytrosylated at unknown positions. In terms of tissue distribution, preferentially expressed in leaves, flowers and siliques and at a lower level in roots and stems.

It localises to the mitochondrion matrix. The catalysed reaction is N(6)-[(R)-dihydrolipoyl]-L-lysyl-[protein] + NAD(+) = N(6)-[(R)-lipoyl]-L-lysyl-[protein] + NADH + H(+). Its function is as follows. Lipoamide dehydrogenase is a component of the glycine decarboxylase (GDC) or glycine cleavage system as well as of the alpha-ketoacid dehydrogenase complexes. LPD1 is probably the protein most often associated with the glycine decarboxylase complex while LPD2 is probably incorporated into alpha-ketoacid dehydrogenase complexes. This Arabidopsis thaliana (Mouse-ear cress) protein is Dihydrolipoyl dehydrogenase 1, mitochondrial (LPD1).